Reading from the N-terminus, the 427-residue chain is MSRQNWVETSALVECISEYIVRSYGDTFIGLTSTDLSTLSNLLSNLSIANVGFLNDLRTPLQNMSNEFVDFLSTTDRCGFMLRPIWFDSDINPAVTDNFVNSYIKLRNSVPVSDVIRQVNNLSLHNDVVLKIYSVQNAIIRALDPPYGTKVDPTNLFRATALKPSNYGQRRSLCTQLGAGVEAVDFFVSERGRMVFGRRSPNALQAAQYDINVPNFWSVLDVTNARVYFTNTFLGCTITNVQVNAQNGQNPVAFIRVNTDQNDINVDSDAIVSFSLAGGVINVTTAVPMTGFAIAIEGDFHFQMNRCQSYYTGVSITLGAQVPIDDFGIMKHLEIFRMRLLACGQAEMFAESMNRLTMQLIANYTQDNFNPNAVAFATPWYRISERFGVILSFIDQNINLQTRRLMVRHLWVIYSFIAVFGRYYNIN.

Belongs to the phytoreovirus outer capsid protein P8 family. Homotrimer. Homomultimer.

It is found in the virion. It localises to the host cytoplasm. Capsid protein which self-assembles to form the outer icosahedral capsid with a T=13 symmetry, about 70 nm in diameter and consisting of 780 molecules capsid proteins. The polypeptide is Outer capsid protein P8 (Catharanthus roseus (Madagascar periwinkle)).